A 333-amino-acid polypeptide reads, in one-letter code: Ketol-acid reductoisomerase (NADP(+)) (333 aa).

The region spanning 1 to 171 (MSNDTQPTIA…GGARANIIKT (171 aa)) is the KARI N-terminal Rossmann domain. NADP(+) is bound by residues 14–17 (YGSQ), Arg-37, Thr-42, and 72–75 (DMVQ). The active site involves His-97. NADP(+) is bound at residue Gly-123. The KARI C-terminal knotted domain occupies 172–317 (TFKEETETDL…KKLRAKMVWL (146 aa)). Mg(2+) contacts are provided by Asp-180, Glu-184, Glu-216, and Glu-220. Ser-241 contacts substrate.

It belongs to the ketol-acid reductoisomerase family. Mg(2+) is required as a cofactor.

It carries out the reaction (2R)-2,3-dihydroxy-3-methylbutanoate + NADP(+) = (2S)-2-acetolactate + NADPH + H(+). It catalyses the reaction (2R,3R)-2,3-dihydroxy-3-methylpentanoate + NADP(+) = (S)-2-ethyl-2-hydroxy-3-oxobutanoate + NADPH + H(+). It functions in the pathway amino-acid biosynthesis; L-isoleucine biosynthesis; L-isoleucine from 2-oxobutanoate: step 2/4. The protein operates within amino-acid biosynthesis; L-valine biosynthesis; L-valine from pyruvate: step 2/4. Its function is as follows. Involved in the biosynthesis of branched-chain amino acids (BCAA). Catalyzes an alkyl-migration followed by a ketol-acid reduction of (S)-2-acetolactate (S2AL) to yield (R)-2,3-dihydroxy-isovalerate. In the isomerase reaction, S2AL is rearranged via a Mg-dependent methyl migration to produce 3-hydroxy-3-methyl-2-ketobutyrate (HMKB). In the reductase reaction, this 2-ketoacid undergoes a metal-dependent reduction by NADPH to yield (R)-2,3-dihydroxy-isovalerate. This Xanthomonas campestris pv. campestris (strain 8004) protein is Ketol-acid reductoisomerase (NADP(+)).